Reading from the N-terminus, the 1433-residue chain is Gag-Pol polyprotein (1433 aa).

A lipid anchor (N-myristoyl glycine; by host) is attached at G2. The segment at 7–31 is interaction with Gp41; the sequence is VLTGGKLDAWEKIRLRPGGRKSYKI. An interaction with host CALM1 region spans residues 8 to 43; sequence LTGGKLDAWEKIRLRPGGRKSYKIKHLVWASRELER. An interaction with host AP3D1 region spans residues 12 to 19; it reads KLDAWEKI. The segment at 14–33 is interaction with membrane phosphatidylinositol 4,5-bisphosphate and RNA; sequence DAWEKIRLRPGGRKSYKIKH. The short motif at 16 to 22 is the Nuclear export signal element; it reads WEKIRLR. The Nuclear localization signal signature appears at 26 to 32; it reads RKSYKIK. The segment at 73–77 is interaction with membrane phosphatidylinositol 4,5-bisphosphate; it reads EEIKS. Position 132 is a phosphotyrosine; by host (Y132). The segment at 189–227 is interaction with human PPIA/CYPA and NUP153; sequence NTVGGHQAAMQMLKDTINEEAAEWDRMHPQQAGPFPPGQ. The segment at 277-363 is dimerization/Multimerization of capsid protein p24; sequence YSPVSILDIR…GGPSHKARVL (87 aa). CCHC-type zinc fingers lie at residues 391 to 408 and 412 to 429; these read IKCF…NCRA and KGCW…DCTE. Residues 445 to 455 are compositionally biased toward basic and acidic residues; that stretch reads EAREFSSEQDR. Residues 445–481 form a disordered region; it reads EAREFSSEQDRTNSPTCRKPRVRRGDSPLPEAGDEGK. The interval 487–491 is dimerization of protease; that stretch reads PQITL. A Peptidase A2 domain is found at 506-575; it reads IEALLDTGAD…TPINIIGRNM (70 aa). Residue D511 is the For protease activity; shared with dimeric partner of the active site. Dimerization of protease stretches follow at residues 535–541 and 574–586; these read GIGGFIK and NMLT…LNFP. Positions 629–819 constitute a Reverse transcriptase domain; that stretch reads EGKISKIGPE…PPFLWMGYEL (191 aa). Mg(2+) contacts are provided by D695, D770, and D771. The interval 812 to 820 is RT 'primer grip'; the sequence is FLWMGYELH. The Tryptophan repeat motif motif lies at 983-999; the sequence is WEIWWTDYWQATWIPEW. The RNase H type-1 domain maps to 1019 to 1142; that stretch reads IPGAETYYVD…VDKLVSSGIR (124 aa). Mg(2+) contacts are provided by D1028, E1063, D1083, and D1134. Residues 1148–1189 form an Integrase-type zinc finger; the sequence is DGIDKAQEEHERYHNNWRAMASDFNLPPIVAKEIVASCDKCQ. Residues H1157, H1161, C1185, and C1188 each coordinate Zn(2+). Positions 1199 to 1349 constitute an Integrase catalytic domain; the sequence is VDCSPGIWQL…SAGERIIDII (151 aa). Mg(2+)-binding residues include D1209, D1261, and E1297. The segment at residues 1368-1415 is a DNA-binding region (integrase-type); sequence FRVYYRDSRDPVWKGPAKLLWKGEGAVVIQDNNEIKVVPRRKAKIIRD.

As to quaternary structure, homotrimer; further assembles as hexamers of trimers. Interacts with gp41 (via C-terminus). Interacts with host CALM1; this interaction induces a conformational change in the Matrix protein, triggering exposure of the myristate group. Interacts with host AP3D1; this interaction allows the polyprotein trafficking to multivesicular bodies during virus assembly. Part of the pre-integration complex (PIC) which is composed of viral genome, matrix protein, Vpr and integrase. Homodimer; the homodimer further multimerizes as homohexamers or homopentamers. Interacts with human PPIA/CYPA; This interaction stabilizes the capsid. Interacts with human NUP153. Interacts with host PDZD8; this interaction stabilizes the capsid. Interacts with monkey TRIM5; this interaction destabilizes the capsid. In terms of assembly, homodimer, whose active site consists of two apposed aspartic acid residues. As to quaternary structure, heterodimer of p66 RT and p51 RT (RT p66/p51). Heterodimerization of RT is essential for DNA polymerase activity. The overall folding of the subdomains is similar in p66 RT and p51 RT but the spatial arrangements of the subdomains are dramatically different. Homotetramer; may further associate as a homohexadecamer. Part of the pre-integration complex (PIC) which is composed of viral genome, matrix protein, Vpr and integrase. Interacts with human SMARCB1/INI1 and human PSIP1/LEDGF isoform 1. Interacts with human KPNA3; this interaction might play a role in nuclear import of the pre-integration complex. Interacts with human NUP153; this interaction might play a role in nuclear import of the pre-integration complex. The cofactor is Mg(2+). In terms of processing, specific enzymatic cleavages by the viral protease yield mature proteins. The protease is released by autocatalytic cleavage. The polyprotein is cleaved during and after budding, this process is termed maturation. Proteolytic cleavage of p66 RT removes the RNase H domain to yield the p51 RT subunit. Nucleocapsid protein p7 might be further cleaved after virus entry. Tyrosine phosphorylated presumably in the virion by a host kinase. Phosphorylation is apparently not a major regulator of membrane association. Post-translationally, phosphorylated possibly by host MAPK1; this phosphorylation is necessary for Pin1-mediated virion uncoating. In terms of processing, methylated by host PRMT6, impairing its function by reducing RNA annealing and the initiation of reverse transcription.

Its subcellular location is the host cell membrane. The protein localises to the host endosome. It localises to the host multivesicular body. The protein resides in the virion membrane. It is found in the host nucleus. Its subcellular location is the host cytoplasm. The protein localises to the virion. It carries out the reaction Specific for a P1 residue that is hydrophobic, and P1' variable, but often Pro.. The enzyme catalyses Endohydrolysis of RNA in RNA/DNA hybrids. Three different cleavage modes: 1. sequence-specific internal cleavage of RNA. Human immunodeficiency virus type 1 and Moloney murine leukemia virus enzymes prefer to cleave the RNA strand one nucleotide away from the RNA-DNA junction. 2. RNA 5'-end directed cleavage 13-19 nucleotides from the RNA end. 3. DNA 3'-end directed cleavage 15-20 nucleotides away from the primer terminus.. The catalysed reaction is 3'-end directed exonucleolytic cleavage of viral RNA-DNA hybrid.. It catalyses the reaction DNA(n) + a 2'-deoxyribonucleoside 5'-triphosphate = DNA(n+1) + diphosphate. With respect to regulation, protease: The viral protease is inhibited by many synthetic protease inhibitors (PIs), such as amprenavir, atazanavir, indinavir, loprinavir, nelfinavir, ritonavir and saquinavir. Use of protease inhibitors in tritherapy regimens permit more ambitious therapeutic strategies. Reverse transcriptase/ribonuclease H: RT can be inhibited either by nucleoside RT inhibitors (NRTIs) or by non nucleoside RT inhibitors (NNRTIs). NRTIs act as chain terminators, whereas NNRTIs inhibit DNA polymerization by binding a small hydrophobic pocket near the RT active site and inducing an allosteric change in this region. Classical NRTIs are abacavir, adefovir (PMEA), didanosine (ddI), lamivudine (3TC), stavudine (d4T), tenofovir (PMPA), zalcitabine (ddC), and zidovudine (AZT). Classical NNRTIs are atevirdine (BHAP U-87201E), delavirdine, efavirenz (DMP-266), emivirine (I-EBU), and nevirapine (BI-RG-587). The tritherapies used as a basic effective treatment of AIDS associate two NRTIs and one NNRTI. Mediates, with Gag polyprotein, the essential events in virion assembly, including binding the plasma membrane, making the protein-protein interactions necessary to create spherical particles, recruiting the viral Env proteins, and packaging the genomic RNA via direct interactions with the RNA packaging sequence (Psi). Gag-Pol polyprotein may regulate its own translation, by the binding genomic RNA in the 5'-UTR. At low concentration, the polyprotein would promote translation, whereas at high concentration, the polyprotein would encapsidate genomic RNA and then shut off translation. Functionally, targets the polyprotein to the plasma membrane via a multipartite membrane-binding signal, that includes its myristoylated N-terminus. Matrix protein is part of the pre-integration complex. Implicated in the release from host cell mediated by Vpu. Binds to RNA. Its function is as follows. Forms the conical core that encapsulates the genomic RNA-nucleocapsid complex in the virion. Most core are conical, with only 7% tubular. The core is constituted by capsid protein hexamer subunits. The core is disassembled soon after virion entry. Host restriction factors such as TRIM5-alpha or TRIMCyp bind retroviral capsids and cause premature capsid disassembly, leading to blocks in reverse transcription. Capsid restriction by TRIM5 is one of the factors which restricts HIV-1 to the human species. Host PIN1 apparently facilitates the virion uncoating. On the other hand, interactions with PDZD8 or CYPA stabilize the capsid. In terms of biological role, encapsulates and protects viral dimeric unspliced genomic RNA (gRNA). Binds these RNAs through its zinc fingers. Acts as a nucleic acid chaperone which is involved in rearangement of nucleic acid secondary structure during gRNA retrotranscription. Also facilitates template switch leading to recombination. As part of the polyprotein, participates in gRNA dimerization, packaging, tRNA incorporation and virion assembly. Aspartyl protease that mediates proteolytic cleavages of Gag and Gag-Pol polyproteins during or shortly after the release of the virion from the plasma membrane. Cleavages take place as an ordered, step-wise cascade to yield mature proteins. This process is called maturation. Displays maximal activity during the budding process just prior to particle release from the cell. Also cleaves Nef and Vif, probably concomitantly with viral structural proteins on maturation of virus particles. Hydrolyzes host EIF4GI and PABP1 in order to shut off the capped cellular mRNA translation. The resulting inhibition of cellular protein synthesis serves to ensure maximal viral gene expression and to evade host immune response. Also mediates cleavage of host YTHDF3. Mediates cleavage of host CARD8, thereby activating the CARD8 inflammasome, leading to the clearance of latent HIV-1 in patient CD4(+) T-cells after viral reactivation; in contrast, HIV-1 can evade CARD8-sensing when its protease remains inactive in infected cells prior to viral budding. Functionally, multifunctional enzyme that converts the viral RNA genome into dsDNA in the cytoplasm, shortly after virus entry into the cell. This enzyme displays a DNA polymerase activity that can copy either DNA or RNA templates, and a ribonuclease H (RNase H) activity that cleaves the RNA strand of RNA-DNA heteroduplexes in a partially processive 3' to 5' endonucleasic mode. Conversion of viral genomic RNA into dsDNA requires many steps. A tRNA(3)-Lys binds to the primer-binding site (PBS) situated at the 5'-end of the viral RNA. RT uses the 3' end of the tRNA primer to perform a short round of RNA-dependent minus-strand DNA synthesis. The reading proceeds through the U5 region and ends after the repeated (R) region which is present at both ends of viral RNA. The portion of the RNA-DNA heteroduplex is digested by the RNase H, resulting in a ssDNA product attached to the tRNA primer. This ssDNA/tRNA hybridizes with the identical R region situated at the 3' end of viral RNA. This template exchange, known as minus-strand DNA strong stop transfer, can be either intra- or intermolecular. RT uses the 3' end of this newly synthesized short ssDNA to perform the RNA-dependent minus-strand DNA synthesis of the whole template. RNase H digests the RNA template except for two polypurine tracts (PPTs) situated at the 5'-end and near the center of the genome. It is not clear if both polymerase and RNase H activities are simultaneous. RNase H probably can proceed both in a polymerase-dependent (RNA cut into small fragments by the same RT performing DNA synthesis) and a polymerase-independent mode (cleavage of remaining RNA fragments by free RTs). Secondly, RT performs DNA-directed plus-strand DNA synthesis using the PPTs that have not been removed by RNase H as primers. PPTs and tRNA primers are then removed by RNase H. The 3' and 5' ssDNA PBS regions hybridize to form a circular dsDNA intermediate. Strand displacement synthesis by RT to the PBS and PPT ends produces a blunt ended, linear dsDNA copy of the viral genome that includes long terminal repeats (LTRs) at both ends. Its function is as follows. Catalyzes viral DNA integration into the host chromosome, by performing a series of DNA cutting and joining reactions. This enzyme activity takes place after virion entry into a cell and reverse transcription of the RNA genome in dsDNA. The first step in the integration process is 3' processing. This step requires a complex comprising the viral genome, matrix protein, Vpr and integrase. This complex is called the pre-integration complex (PIC). The integrase protein removes 2 nucleotides from each 3' end of the viral DNA, leaving recessed CA OH's at the 3' ends. In the second step, the PIC enters cell nucleus. This process is mediated through integrase and Vpr proteins, and allows the virus to infect a non dividing cell. This ability to enter the nucleus is specific of lentiviruses, other retroviruses cannot and rely on cell division to access cell chromosomes. In the third step, termed strand transfer, the integrase protein joins the previously processed 3' ends to the 5' ends of strands of target cellular DNA at the site of integration. The 5'-ends are produced by integrase-catalyzed staggered cuts, 5 bp apart. A Y-shaped, gapped, recombination intermediate results, with the 5'-ends of the viral DNA strands and the 3' ends of target DNA strands remaining unjoined, flanking a gap of 5 bp. The last step is viral DNA integration into host chromosome. This involves host DNA repair synthesis in which the 5 bp gaps between the unjoined strands are filled in and then ligated. Since this process occurs at both cuts flanking the HIV genome, a 5 bp duplication of host DNA is produced at the ends of HIV-1 integration. Alternatively, Integrase may catalyze the excision of viral DNA just after strand transfer, this is termed disintegration. The polypeptide is Gag-Pol polyprotein (gag-pol) (Human immunodeficiency virus type 1 group M subtype G (isolate SE6165) (HIV-1)).